Consider the following 71-residue polypeptide: Small ribosomal subunit protein bS21 (71 aa).

This sequence belongs to the bacterial ribosomal protein bS21 family.

The polypeptide is Small ribosomal subunit protein bS21 (Blochmanniella pennsylvanica (strain BPEN)).